A 316-amino-acid polypeptide reads, in one-letter code: B3 domain-containing protein Os04g0581400 (316 aa).

The segment at 1 to 100 (MEFATTSSRF…GSGGGGGGED (100 aa)) is disordered. The span at 13–36 (EEEEEEEGEQEMEQEQDEEEEEAE) shows a compositional bias: acidic residues. A compositionally biased stretch (low complexity) spans 46–77 (TSAAAAATASSSSPTSVSPSATASAAASTSAS). Positions 88–98 (GASGSGGGGGG) are enriched in gly residues. The TF-B3 DNA-binding region spans 110 to 215 (FDKVVTPSDV…RLFIDWKRRA (106 aa)). Residues 239 to 290 (GGAGASSCRPRRPPRSTSITAFARASTSATSTPLCRRGSSSSSAPQGRGFIS) are disordered. Low complexity predominate over residues 253–270 (RSTSITAFARASTSATST).

It localises to the nucleus. The sequence is that of B3 domain-containing protein Os04g0581400 from Oryza sativa subsp. japonica (Rice).